A 443-amino-acid chain; its full sequence is Threonine/serine transporter TdcC (443 aa).

The next 11 helical transmembrane spans lie at 24–44 (WVLGLFGTAIGAGVLFFPISA), 45–65 (GIGGLLPIIFMLILAFPIAFF), 95–115 (VGGVVITFLYFFAICPLLWIY), 140–160 (VVALAILLVMAFFIYFGKDLM), 163–183 (VMGYLVFPFITCLVLISLSLI), 207–227 (ILVTVWLGIAIMVFSFNFSPI), 259–279 (ASVLMVVVVMFFAFSCLFTLS), 319–339 (ASIIALVAIFKSFFGHYLGTL), 363–383 (LNMISMVIIMGSTWVIAYINP), 385–405 (ILDLIGAMGAPIIAALLCLLP), and 423–443 (SNYFVTIIGLLTILNIVYQLM).

Belongs to the amino acid/polyamine transporter 2 family. SdaC/TdcC subfamily.

The protein localises to the cell inner membrane. It carries out the reaction L-threonine(in) + H(+)(in) = L-threonine(out) + H(+)(out). It catalyses the reaction L-serine(in) + H(+)(in) = L-serine(out) + H(+)(out). Its function is as follows. Involved in the import of threonine and serine into the cell, with the concomitant import of a proton (symport system). The sequence is that of Threonine/serine transporter TdcC from Edwardsiella tarda.